A 441-amino-acid polypeptide reads, in one-letter code: MVGAKPVENGSDGGSSTGLLHGRYELGRLLGHGTFAKVYHARNIQTGKSVAMKVVGKEKVVKVGMVDQIKREISVMRMVKHPNIVELHEVMASKSKIYFAMELVRGGELFAKVAKGRLREDVARVYFQQLISAVDFCHSRGVYHRDLKPENLLLDEEGNLKVTDFGLSAFTEHLKQDGLLHTTCGTPAYVAPEVILKKGYDGAKADLWSCGVILFVLLAGYLPFQDDNLVNMYRKIYRGDFKCPGWLSSDARRLVTKLLDPNPNTRITIEKVMDSPWFKKQATRSRNEPVAATITTTEEDVDFLVHKSKEETETLNAFHIIALSEGFDLSPLFEEKKKEEKREMRFATSRPASSVISSLEEAARVGNKFDVRKSESRVRIEGKQNGRKGKLAVEAEIFAVAPSFVVVEVKKDHGDTLEYNNFCSTALRPALKDIFWTSTPA.

Residues 24 to 278 (YELGRLLGHG…IEKVMDSPWF (255 aa)) form the Protein kinase domain. Residues 30-38 (LGHGTFAKV) and Lys53 contribute to the ATP site. The active-site Proton acceptor is the Asp146. Positions 164–193 (DFGLSAFTEHLKQDGLLHTTCGTPAYVAPE) are activation loop. Ser168 carries the post-translational modification Phosphoserine. The residue at position 182 (Thr182) is a Phosphothreonine. Positions 310–334 (EETETLNAFHIIALSEGFDLSPLFE) constitute an NAF domain. The tract at residues 341-371 (KREMRFATSRPASSVISSLEEAARVGNKFDV) is PPI.

Belongs to the protein kinase superfamily. CAMK Ser/Thr protein kinase family. SNF1 subfamily. In terms of assembly, part of a K(+)-channel calcium-sensing kinase/phosphatase complex composed by a calcium sensor CBL (CBL1, CBL2, CBL3 or CBL9), a kinase CIPK (CIPK6, CIPK16 or CIPK23), a phosphatase PP2C (AIP1) and a K(+)-channel (AKT1). Interacts with AKT1, AKT2,CBL1, CBL2, CBL3, CBL4/SOS3 and CBL9. Requires Mn(2+) as cofactor. Post-translationally, autophosphorylated. Expressed in roots and shoots.

The protein localises to the endoplasmic reticulum. It catalyses the reaction L-seryl-[protein] + ATP = O-phospho-L-seryl-[protein] + ADP + H(+). The catalysed reaction is L-threonyl-[protein] + ATP = O-phospho-L-threonyl-[protein] + ADP + H(+). CIPK serine-threonine protein kinases interact with CBL proteins. Binding of a CBL protein to the regulatory NAF domain of CIPK protein lead to the activation of the kinase in a calcium-dependent manner. Downstream of CBL1, CBL2, CBL3 and CBL9, regulates by phosphorylation the K(+) conductance and uptake of AKT1. Binds to CBL4 to modulate AKT2 activity by promoting a kinase interaction-dependent but phosphorylation-independent translocation of the channel to the plasma membrane. The sequence is that of CBL-interacting serine/threonine-protein kinase 6 (CIPK6) from Arabidopsis thaliana (Mouse-ear cress).